The chain runs to 130 residues: Encapsulin nanocompartment cargo protein EncC (130 aa).

Residues glutamate 31, glutamate 61, and histidine 64 each coordinate Fe cation. The short motif at 61 to 64 is the Di-iron-binding motif element; the sequence is EREH. Residues 103 to 130 are disordered; sequence EAVGKEGAAPSPADVTPEKRLTVGSLRR. Residues 123–130 are probable targeting peptide; that stretch reads LTVGSLRR.

This sequence belongs to the ferritin-like superfamily.

It is found in the encapsulin nanocompartment. Functionally, cargo protein of a type 1 encapsulin nanocompartment. May help nucleate Fe atoms in the interior of the encapsulin nanocompartment. Present in about 92 copies/encapsulin nanocompartment. This Myxococcus xanthus (strain DK1622) protein is Encapsulin nanocompartment cargo protein EncC.